The sequence spans 103 residues: Putative membrane protein insertion efficiency factor (103 aa).

The protein belongs to the UPF0161 family.

The protein localises to the cell inner membrane. In terms of biological role, could be involved in insertion of integral membrane proteins into the membrane. The protein is Putative membrane protein insertion efficiency factor of Chlamydia caviae (strain ATCC VR-813 / DSM 19441 / 03DC25 / GPIC) (Chlamydophila caviae).